We begin with the raw amino-acid sequence, 338 residues long: tRNA N6-adenosine threonylcarbamoyltransferase (338 aa).

Fe cation is bound by residues His111 and His115. Residues 134–138, Asp167, Gly180, and Asn272 each bind substrate; that span reads LVSGG. A Fe cation-binding site is contributed by Asp300.

The protein belongs to the KAE1 / TsaD family. Fe(2+) serves as cofactor.

It localises to the cytoplasm. The enzyme catalyses L-threonylcarbamoyladenylate + adenosine(37) in tRNA = N(6)-L-threonylcarbamoyladenosine(37) in tRNA + AMP + H(+). Functionally, required for the formation of a threonylcarbamoyl group on adenosine at position 37 (t(6)A37) in tRNAs that read codons beginning with adenine. Is involved in the transfer of the threonylcarbamoyl moiety of threonylcarbamoyl-AMP (TC-AMP) to the N6 group of A37, together with TsaE and TsaB. TsaD likely plays a direct catalytic role in this reaction. This is tRNA N6-adenosine threonylcarbamoyltransferase from Aliivibrio salmonicida (strain LFI1238) (Vibrio salmonicida (strain LFI1238)).